The following is a 439-amino-acid chain: UDP-N-acetylmuramoylalanine--D-glutamate ligase (439 aa).

Residue glycine 112–threonine 118 coordinates ATP.

Belongs to the MurCDEF family.

The protein localises to the cytoplasm. It carries out the reaction UDP-N-acetyl-alpha-D-muramoyl-L-alanine + D-glutamate + ATP = UDP-N-acetyl-alpha-D-muramoyl-L-alanyl-D-glutamate + ADP + phosphate + H(+). It participates in cell wall biogenesis; peptidoglycan biosynthesis. Functionally, cell wall formation. Catalyzes the addition of glutamate to the nucleotide precursor UDP-N-acetylmuramoyl-L-alanine (UMA). The polypeptide is UDP-N-acetylmuramoylalanine--D-glutamate ligase (Mannheimia succiniciproducens (strain KCTC 0769BP / MBEL55E)).